Reading from the N-terminus, the 1291-residue chain is Vacuolating cytotoxin autotransporter (1291 aa).

Residues 1 to 33 (MEIQQTHRKINRPLVSLALVGALVSITPQQSHA) form the signal peptide. Residues 326-374 (PPEGGYKDKPNDKPSNTTQNNAKNDKQESSQNNSNTQVINPPNSAQKTE) form a disordered region. Polar residues-rich tracts occupy residues 338–347 (KPSNTTQNNA) and 354–374 (SSQN…QKTE). Residues 1018–1291 (KYEKPTNVWA…ASNLGMRYSF (274 aa)) form the Autotransporter domain.

Its subcellular location is the periplasm. It localises to the secreted. It is found in the cell surface. The protein localises to the cell outer membrane. Functionally, induces vacuolation of eukaryotic cells. Causes ulceration and gastric lesions. This is Vacuolating cytotoxin autotransporter (vacA) from Helicobacter pylori (Campylobacter pylori).